The primary structure comprises 261 residues: Nickel import ATP-binding protein NikD (261 aa).

The region spanning 6–248 (LRIEGLTIAT…PRHDATRALV (243 aa)) is the ABC transporter domain. 41-48 (GASGSGKS) lines the ATP pocket.

The protein belongs to the ABC transporter superfamily. Nickel importer (TC 3.A.1.5.3) family. The complex is composed of two ATP-binding proteins (NikD and NikE), two transmembrane proteins (NikB and NikC) and a solute-binding protein (NikA).

It is found in the cell inner membrane. It catalyses the reaction Ni(2+)(out) + ATP + H2O = Ni(2+)(in) + ADP + phosphate + H(+). Functionally, part of the ABC transporter complex NikABCDE involved in nickel import. Responsible for energy coupling to the transport system. The protein is Nickel import ATP-binding protein NikD of Rhodospirillum rubrum (strain ATCC 11170 / ATH 1.1.1 / DSM 467 / LMG 4362 / NCIMB 8255 / S1).